The following is a 435-amino-acid chain: Maltodextrin transport system permease protein MalC (435 aa).

The next 10 membrane-spanning stretches (helical) occupy residues 34 to 54, 73 to 93, 130 to 150, 199 to 219, 230 to 250, 263 to 283, 294 to 314, 338 to 358, 371 to 391, and 404 to 424; these read GFIF…LATP, FMLI…LFYF, YLLI…PVIV, IIWA…TAII, IFGV…ILTF, TQVL…LIPW, LIMM…LGIL, NITF…QYTF, GGGP…ISWI, and MAAA…MIAF. Positions 195-423 constitute an ABC transmembrane type-1 domain; it reads LSWTIIWALA…IIVISISMIA (229 aa).

Belongs to the binding-protein-dependent transport system permease family. MalFG subfamily.

The protein localises to the cell membrane. In terms of biological role, part of the binding-protein-dependent transport system for maltodextrin; probably responsible for the translocation of the substrate across the membrane. This is Maltodextrin transport system permease protein MalC (malC) from Streptococcus pneumoniae serotype 4 (strain ATCC BAA-334 / TIGR4).